We begin with the raw amino-acid sequence, 467 residues long: Fumarate hydratase class II (467 aa).

Substrate is bound by residues 98-100 (SGT), Arg-126, 129-132 (HPND), 139-141 (SSN), and Thr-187. The active-site Proton donor/acceptor is the His-188. The active site involves Ser-318. Substrate is bound by residues Ser-319 and 324-326 (KVN).

Belongs to the class-II fumarase/aspartase family. Fumarase subfamily. As to quaternary structure, homotetramer.

It is found in the cytoplasm. The enzyme catalyses (S)-malate = fumarate + H2O. The protein operates within carbohydrate metabolism; tricarboxylic acid cycle; (S)-malate from fumarate: step 1/1. In terms of biological role, involved in the TCA cycle. Catalyzes the stereospecific interconversion of fumarate to L-malate. The sequence is that of Fumarate hydratase class II from Salmonella typhi.